Here is a 341-residue protein sequence, read N- to C-terminus: LIM and senescent cell antigen-like-containing domain protein 2 (341 aa).

LIM zinc-binding domains lie at 13–74, 76–133, 138–195, 196–255, and 256–315; these read AMCQ…LFAP, CGFC…EKAK, FICQ…KMGI, PICG…LFGD, and VCYN…FPLE. A Phosphoserine modification is found at serine 328.

In terms of assembly, interacts with integrin-linked protein kinase 1 (ILK) via the first LIM domain, and in competition with LIMS1. Part of the heterotrimeric IPP complex composed of integrin-linked kinase (ILK), LIMS1 or LIMS2, and PARVA. Interacts with TGFB1I1. Detected in heart, lung, kidney, liver, urinary bladder, fat, skin, skeletal muscle, uterus, large intestine and testis.

The protein resides in the cell junction. It localises to the focal adhesion. The protein localises to the cell membrane. Adapter protein in a cytoplasmic complex linking beta-integrins to the actin cytoskeleton, bridges the complex to cell surface receptor tyrosine kinases and growth factor receptors. The polypeptide is LIM and senescent cell antigen-like-containing domain protein 2 (Lims2) (Mus musculus (Mouse)).